Reading from the N-terminus, the 990-residue chain is Bifunctional glutamine synthetase adenylyltransferase/adenylyl-removing enzyme (990 aa).

Residues Met1 to Gln474 are adenylyl removase. Residues Phe484–Glu990 form an adenylyl transferase region.

Belongs to the GlnE family. Mg(2+) serves as cofactor.

The catalysed reaction is [glutamine synthetase]-O(4)-(5'-adenylyl)-L-tyrosine + phosphate = [glutamine synthetase]-L-tyrosine + ADP. The enzyme catalyses [glutamine synthetase]-L-tyrosine + ATP = [glutamine synthetase]-O(4)-(5'-adenylyl)-L-tyrosine + diphosphate. Functionally, involved in the regulation of glutamine synthetase GlnA, a key enzyme in the process to assimilate ammonia. When cellular nitrogen levels are high, the C-terminal adenylyl transferase (AT) inactivates GlnA by covalent transfer of an adenylyl group from ATP to specific tyrosine residue of GlnA, thus reducing its activity. Conversely, when nitrogen levels are low, the N-terminal adenylyl removase (AR) activates GlnA by removing the adenylyl group by phosphorolysis, increasing its activity. The regulatory region of GlnE binds the signal transduction protein PII (GlnB) which indicates the nitrogen status of the cell. The polypeptide is Bifunctional glutamine synthetase adenylyltransferase/adenylyl-removing enzyme (Alteromonas mediterranea (strain DSM 17117 / CIP 110805 / LMG 28347 / Deep ecotype)).